A 219-amino-acid chain; its full sequence is RPA-interacting protein (219 aa).

A Phosphoserine modification is found at S18. An RIP-type zinc finger spans residues 137 to 212; sequence CPVCIKYNLR…PSLLMNCLTC (76 aa). A mediates nuclear export region spans residues 164-180; that stretch reads STDLTEQKLRACLEENV.

In terms of assembly, interacts with the RPA1 subunit of RPA complex. Sumoylated; required for localization in the nuclear PML body and transport of RPA complex in PML body. Upon UV irradiation and during S phase, it is desumoylated, releasing RPA complex that is translocated to sites of DNA damage. Sumoylation takes place at different Lys residues.

It localises to the nucleus. Its function is as follows. Mediates the import of RPA complex into the nucleus, possibly via some interaction with importin beta. Sumoylation mediates the localization of RPA complex into the PML body of the nucleus, thereby participating in RPA function in DNA metabolism. This is RPA-interacting protein (Rpain) from Mus musculus (Mouse).